The following is a 435-amino-acid chain: 3-phosphoshikimate 1-carboxyvinyltransferase (435 aa).

Positions 28, 29, and 33 each coordinate 3-phosphoshikimate. K28 is a binding site for phosphoenolpyruvate. Residues G100 and R128 each contribute to the phosphoenolpyruvate site. Positions 173, 175, 321, and 348 each coordinate 3-phosphoshikimate. Residue Q175 participates in phosphoenolpyruvate binding. D321 functions as the Proton acceptor in the catalytic mechanism. Residues R352 and R394 each coordinate phosphoenolpyruvate.

It belongs to the EPSP synthase family. In terms of assembly, monomer.

The protein resides in the cytoplasm. It catalyses the reaction 3-phosphoshikimate + phosphoenolpyruvate = 5-O-(1-carboxyvinyl)-3-phosphoshikimate + phosphate. The protein operates within metabolic intermediate biosynthesis; chorismate biosynthesis; chorismate from D-erythrose 4-phosphate and phosphoenolpyruvate: step 6/7. Catalyzes the transfer of the enolpyruvyl moiety of phosphoenolpyruvate (PEP) to the 5-hydroxyl of shikimate-3-phosphate (S3P) to produce enolpyruvyl shikimate-3-phosphate and inorganic phosphate. In Desulfitobacterium hafniense (strain DSM 10664 / DCB-2), this protein is 3-phosphoshikimate 1-carboxyvinyltransferase.